An 89-amino-acid chain; its full sequence is MLKFVVLIFVVIMASTFAEQCGDKVCGEGTCCSEFPVVHCRELGIVDDLCMSPGETTDSGRYLFFCPCETGLRCDKNDWTCKQDSSRSE.

Positions 1–18 (MLKFVVLIFVVIMASTFA) are cleaved as a signal peptide. 5 disulfide bridges follow: Cys-21-Cys-32, Cys-26-Cys-40, Cys-31-Cys-66, Cys-50-Cys-74, and Cys-68-Cys-81. Positions 87-89 (RSE) are excised as a propeptide.

Belongs to the MIT-like AcTx family. Expressed by the venom gland.

The protein resides in the secreted. This is U1-hexatoxin-Iw1e from Illawarra wisharti (Illawarra funnel-web spider).